A 128-amino-acid chain; its full sequence is Platelet basic protein (128 aa).

An N-terminal signal peptide occupies residues 1-34 (MSLRLDTTPSCNSARPLHALQVLLLLSLLLTALA). 2 disulfide bridges follow: cysteine 63-cysteine 89 and cysteine 65-cysteine 105.

It belongs to the intercrine alpha (chemokine CxC) family. As to quaternary structure, beta-thromboglobulin is a homotetramer. Post-translationally, proteolytic removal of residues 1-9 produces the active peptide connective tissue-activating peptide III (CTAP-III) (low-affinity platelet factor IV (LA-PF4)). In terms of processing, proteolytic removal of residues 1-13 produces the active peptide beta-thromboglobulin, which is released from platelets along with platelet factor 4 and platelet-derived growth factor. NAP-2(1-66) is produced by proteolytical processing, probably after secretion by leukocytes other than neutrophils. Post-translationally, NAP-2(73) and NAP-2(74) seem not be produced by proteolytical processing of secreted precursors but are released in an active form from platelets.

The protein resides in the secreted. In terms of biological role, LA-PF4 stimulates DNA synthesis, mitosis, glycolysis, intracellular cAMP accumulation, prostaglandin E2 secretion, and synthesis of hyaluronic acid and sulfated glycosaminoglycan. It also stimulates the formation and secretion of plasminogen activator by human synovial cells. NAP-2 is a ligand for CXCR1 and CXCR2, and NAP-2, NAP-2(73), NAP-2(74), NAP-2(1-66), and most potent NAP-2(1-63) are chemoattractants and activators for neutrophils. TC-1 and TC-2 are antibacterial proteins, in vitro released from activated platelet alpha-granules. CTAP-III(1-81) is more potent than CTAP-III desensitize chemokine-induced neutrophil activation. In Homo sapiens (Human), this protein is Platelet basic protein (PPBP).